The sequence spans 212 residues: Ion-translocating oxidoreductase complex subunit G (212 aa).

Residues 9–29 (GFLLALFALICTGLVAAVNQQ) traverse the membrane as a helical segment. Position 176 is an FMN phosphoryl threonine (Thr-176).

It belongs to the RnfG family. The complex is composed of six subunits: RnfA, RnfB, RnfC, RnfD, RnfE and RnfG. The cofactor is FMN.

The protein resides in the cell inner membrane. Functionally, part of a membrane-bound complex that couples electron transfer with translocation of ions across the membrane. The protein is Ion-translocating oxidoreductase complex subunit G of Shewanella baltica (strain OS223).